A 372-amino-acid chain; its full sequence is Glutamate 5-kinase (372 aa).

Residue Lys14 coordinates ATP. Positions 54, 141, and 153 each coordinate substrate. 173 to 174 (TD) is an ATP binding site. The region spanning 280–358 (AGRIVLDQGA…TDILSILGFV (79 aa)) is the PUA domain.

Belongs to the glutamate 5-kinase family.

It is found in the cytoplasm. It catalyses the reaction L-glutamate + ATP = L-glutamyl 5-phosphate + ADP. Its pathway is amino-acid biosynthesis; L-proline biosynthesis; L-glutamate 5-semialdehyde from L-glutamate: step 1/2. Its function is as follows. Catalyzes the transfer of a phosphate group to glutamate to form L-glutamate 5-phosphate. The protein is Glutamate 5-kinase of Herminiimonas arsenicoxydans.